The following is a 302-amino-acid chain: Nucleotide-binding protein Rsph17029_0317 (302 aa).

15-22 (GPSGAGRT) provides a ligand contact to ATP. 62–65 (DVRN) contacts GTP.

The protein belongs to the RapZ-like family.

Functionally, displays ATPase and GTPase activities. This is Nucleotide-binding protein Rsph17029_0317 from Cereibacter sphaeroides (strain ATCC 17029 / ATH 2.4.9) (Rhodobacter sphaeroides).